Consider the following 124-residue polypeptide: Small ribosomal subunit protein uS12 (124 aa).

The interval 1–30 (MPTIQQLVRKGRQDKVAKTKTAALKGSPQR) is disordered. At Asp89 the chain carries 3-methylthioaspartic acid. The tract at residues 102 to 124 (ADTQGVKNRKQARSRYGAKKEKS) is disordered. The segment covering 108–118 (KNRKQARSRYG) has biased composition (basic residues).

It belongs to the universal ribosomal protein uS12 family. In terms of assembly, part of the 30S ribosomal subunit. Contacts proteins S8 and S17. May interact with IF1 in the 30S initiation complex.

Its function is as follows. With S4 and S5 plays an important role in translational accuracy. Functionally, interacts with and stabilizes bases of the 16S rRNA that are involved in tRNA selection in the A site and with the mRNA backbone. Located at the interface of the 30S and 50S subunits, it traverses the body of the 30S subunit contacting proteins on the other side and probably holding the rRNA structure together. The combined cluster of proteins S8, S12 and S17 appears to hold together the shoulder and platform of the 30S subunit. This chain is Small ribosomal subunit protein uS12, found in Saccharopolyspora erythraea (strain ATCC 11635 / DSM 40517 / JCM 4748 / NBRC 13426 / NCIMB 8594 / NRRL 2338).